Consider the following 238-residue polypeptide: Uridylate kinase (238 aa).

Lys12–Gly15 provides a ligand contact to ATP. Gly54 lines the UMP pocket. Positions 55 and 59 each coordinate ATP. Residues Asp74 and Thr135–Thr142 each bind UMP. 3 residues coordinate ATP: Thr162, Tyr168, and Asp171.

The protein belongs to the UMP kinase family. In terms of assembly, homohexamer.

The protein localises to the cytoplasm. It carries out the reaction UMP + ATP = UDP + ADP. It functions in the pathway pyrimidine metabolism; CTP biosynthesis via de novo pathway; UDP from UMP (UMPK route): step 1/1. Inhibited by UTP. In terms of biological role, catalyzes the reversible phosphorylation of UMP to UDP. The polypeptide is Uridylate kinase (Bordetella bronchiseptica (strain ATCC BAA-588 / NCTC 13252 / RB50) (Alcaligenes bronchisepticus)).